Consider the following 156-residue polypeptide: Small ribosomal subunit protein uS7 (156 aa).

This sequence belongs to the universal ribosomal protein uS7 family. As to quaternary structure, part of the 30S ribosomal subunit. Contacts proteins S9 and S11.

Its function is as follows. One of the primary rRNA binding proteins, it binds directly to 16S rRNA where it nucleates assembly of the head domain of the 30S subunit. Is located at the subunit interface close to the decoding center, probably blocks exit of the E-site tRNA. This chain is Small ribosomal subunit protein uS7, found in Myxococcus xanthus (strain DK1622).